Here is a 284-residue protein sequence, read N- to C-terminus: 4-diphosphocytidyl-2-C-methyl-D-erythritol kinase (284 aa).

The active site involves lysine 14. Position 98 to 108 (98 to 108) interacts with ATP; the sequence is PMGGGLGGGSS. Residue aspartate 140 is part of the active site.

This sequence belongs to the GHMP kinase family. IspE subfamily.

The enzyme catalyses 4-CDP-2-C-methyl-D-erythritol + ATP = 4-CDP-2-C-methyl-D-erythritol 2-phosphate + ADP + H(+). The protein operates within isoprenoid biosynthesis; isopentenyl diphosphate biosynthesis via DXP pathway; isopentenyl diphosphate from 1-deoxy-D-xylulose 5-phosphate: step 3/6. Catalyzes the phosphorylation of the position 2 hydroxy group of 4-diphosphocytidyl-2C-methyl-D-erythritol. The sequence is that of 4-diphosphocytidyl-2-C-methyl-D-erythritol kinase from Shewanella baltica (strain OS223).